The chain runs to 458 residues: 5'-adenylylsulfate reductase 3, chloroplastic (458 aa).

Positions 1-24 (MALAINVSSSSSSAISSSSFPSSD) are disordered. The N-terminal 69 residues, 1–69 (MALAINVSSS…VQSITKESIV (69 aa)), are a transit peptide targeting the chloroplast. The span at 8–23 (SSSSSSAISSSSFPSS) shows a compositional bias: low complexity. The interval 70-319 (ASEVTEKLDV…KAKECGLHKG (250 aa)) is reductase domain. One can recognise a Thioredoxin domain in the interval 337–458 (ASVADIFNSE…SLTSFLNLVR (122 aa)). Active-site nucleophile residues include Cys378 and Cys381. Cys378 and Cys381 are joined by a disulfide.

It belongs to the APS reductase family. Requires [4Fe-4S] cluster as cofactor. In terms of tissue distribution, leaves, roots and stem.

The protein resides in the plastid. Its subcellular location is the chloroplast. The enzyme catalyses glutathione disulfide + sulfite + AMP + 2 H(+) = adenosine 5'-phosphosulfate + 2 glutathione. Stimulated by sodium sulfate &gt; ammonium sulfate. Functionally, reduces sulfate for Cys biosynthesis. Substrate preference is adenosine-5'-phosphosulfate (APS) &gt;&gt; 3'-phosphoadenosine-5'-phosphosulfate (PAPS). Uses glutathione or DTT as source of protons. In Arabidopsis thaliana (Mouse-ear cress), this protein is 5'-adenylylsulfate reductase 3, chloroplastic (APR3).